Here is a 532-residue protein sequence, read N- to C-terminus: Protein FAM227B (532 aa).

A coiled-coil region spans residues 432 to 482 (DNKKDFKRVKQRIKDDIKFLREQQELIDKELDRIQAKASKNLQEVKNEFEN). The disordered stretch occupies residues 494–532 (KEEYGGSTSASESPQSMQSPQSSSSFPTISEDFNNVEEG). Low complexity predominate over residues 500 to 523 (STSASESPQSMQSPQSSSSFPTIS).

The protein belongs to the FAM227 family.

The chain is Protein FAM227B (Fam227b) from Mus musculus (Mouse).